Consider the following 181-residue polypeptide: RING-H2 finger protein ATL72 (181 aa).

The chain crosses the membrane as a helical span at residues 34–54; sequence VIILAALLCALICALSLNSAL. The segment at 114-156 adopts an RING-type; atypical zinc-finger fold; that stretch reads CLICLGDFEDGEKVRVLPKCNHGFHVRCIDTWLLSRSSCPTCR.

This sequence belongs to the RING-type zinc finger family. ATL subfamily.

It localises to the membrane. The catalysed reaction is S-ubiquitinyl-[E2 ubiquitin-conjugating enzyme]-L-cysteine + [acceptor protein]-L-lysine = [E2 ubiquitin-conjugating enzyme]-L-cysteine + N(6)-ubiquitinyl-[acceptor protein]-L-lysine.. It functions in the pathway protein modification; protein ubiquitination. The sequence is that of RING-H2 finger protein ATL72 (ATL72) from Arabidopsis thaliana (Mouse-ear cress).